A 156-amino-acid chain; its full sequence is Small ribosomal subunit protein uS7 (156 aa).

It belongs to the universal ribosomal protein uS7 family. Part of the 30S ribosomal subunit. Contacts proteins S9 and S11.

Its function is as follows. One of the primary rRNA binding proteins, it binds directly to 16S rRNA where it nucleates assembly of the head domain of the 30S subunit. Is located at the subunit interface close to the decoding center, probably blocks exit of the E-site tRNA. This Heliobacterium modesticaldum (strain ATCC 51547 / Ice1) protein is Small ribosomal subunit protein uS7.